The following is an 805-amino-acid chain: MATDRLTRVHSLRERLDETLSANRNEILALLSRIEGKGKGILQHHQVIAEFEEIPEESRQKLTDGAFGEVLRSTQEAIVLPPWVALAVRPRPGVWEYLRVNVHALVVEVLQPAEYLRFKEELVDGSSNGNFVLELDFEPFTASFPRPTLNKSIGNGVQFLNRHLSAKLFHDKESLHPLLEFLRLHSVKGKTLMLNDRIQNPDALQHVLRKAEEYLGTVPPETPYSAFEHKFQEIGLERGWGDNAERVLESIQLLLDLLEAPDPCTLETFLGRIPMVFNVVILSPHGYFAQDNVLGYPDTGGQVVYILDQVRALENEMLHRIKQQGLDIVPRILIITRLLPDAVGTTCGQRLEKVFGTEHSHILRVPFRTENGIVRKWISRFEVWPYLETYTEDVAHELAKELQGKPDLIVGNYSDGNIVASLLAHKLGVTQCTIAHALEKTKYPESDIYWKKLEERYHFSCQFTADLFAMNHTDFIITSTFQEIAGSKDTVGQYESHTAFTLPGLYRVVHGIDVFDPKFNIVSPGADQTIYFPHTETSRRLTSFHTEIEELLYSSVENEEHICVLKDRSKPIIFTMARLDRVKNITGLVEWYGKNAKLRELVNLVVVAGDRRKESKDLEEKAEMKKMYSLIETYKLNGQFRWISSQMNRVRNGELYRVIADTKGAFVQPAVYEAFGLTVVEAMTCGLPTFATCNGGPAEIIVHGKSGFHIDPYHGDRAADLLVEFFEKVKVDPSHWDKISQAGLQRIEEKYTWQIYSQRLLTLTGVYGFWKHVSNLDRRESRRYLEMFYALKYRKLAESVPLAVE.

The segment at 275 to 752 is GT-B glycosyltransferase; the sequence is MVFNVVILSP…GLQRIEEKYT (478 aa).

The protein belongs to the glycosyltransferase 1 family. Plant sucrose synthase subfamily.

The catalysed reaction is an NDP-alpha-D-glucose + D-fructose = a ribonucleoside 5'-diphosphate + sucrose + H(+). Sucrose-cleaving enzyme that provides UDP-glucose and fructose for various metabolic pathways. In Vigna radiata var. radiata (Mung bean), this protein is Sucrose synthase (SS1).